The primary structure comprises 274 residues: 2,3,4,5-tetrahydropyridine-2,6-dicarboxylate N-succinyltransferase (274 aa).

The substrate site is built by R104 and D141.

The protein belongs to the transferase hexapeptide repeat family. As to quaternary structure, homotrimer.

It is found in the cytoplasm. It catalyses the reaction (S)-2,3,4,5-tetrahydrodipicolinate + succinyl-CoA + H2O = (S)-2-succinylamino-6-oxoheptanedioate + CoA. Its pathway is amino-acid biosynthesis; L-lysine biosynthesis via DAP pathway; LL-2,6-diaminopimelate from (S)-tetrahydrodipicolinate (succinylase route): step 1/3. This is 2,3,4,5-tetrahydropyridine-2,6-dicarboxylate N-succinyltransferase from Shigella dysenteriae serotype 1 (strain Sd197).